The chain runs to 772 residues: Probable beta-glucosidase M (772 aa).

An N-terminal signal peptide occupies residues 1 to 20; that stretch reads MLTSWGKTGFVLALALGGRA. Asparagine 259 is a glycosylation site (N-linked (GlcNAc...) asparagine). The active site involves aspartate 287. Asparagine 315, asparagine 322, asparagine 438, asparagine 523, asparagine 547, asparagine 574, and asparagine 586 each carry an N-linked (GlcNAc...) asparagine glycan.

This sequence belongs to the glycosyl hydrolase 3 family.

Its subcellular location is the secreted. It catalyses the reaction Hydrolysis of terminal, non-reducing beta-D-glucosyl residues with release of beta-D-glucose.. Its pathway is glycan metabolism; cellulose degradation. In terms of biological role, beta-glucosidases are one of a number of cellulolytic enzymes involved in the degradation of cellulosic biomass. Catalyzes the last step releasing glucose from the inhibitory cellobiose. This Emericella nidulans (strain FGSC A4 / ATCC 38163 / CBS 112.46 / NRRL 194 / M139) (Aspergillus nidulans) protein is Probable beta-glucosidase M (bglM).